The chain runs to 487 residues: UDP-N-acetylmuramoyl-L-alanyl-D-glutamate--2,6-diaminopimelate ligase (487 aa).

Serine 30 contacts UDP-N-acetyl-alpha-D-muramoyl-L-alanyl-D-glutamate. 109 to 115 (GTNGKTS) is a binding site for ATP. UDP-N-acetyl-alpha-D-muramoyl-L-alanyl-D-glutamate is bound by residues 151 to 152 (TT), serine 178, and arginine 186. Residue lysine 218 is modified to N6-carboxylysine. Residues arginine 379, 403 to 406 (DNPR), glycine 455, and glutamate 459 contribute to the meso-2,6-diaminopimelate site. The Meso-diaminopimelate recognition motif signature appears at 403 to 406 (DNPR).

This sequence belongs to the MurCDEF family. MurE subfamily. Requires Mg(2+) as cofactor. In terms of processing, carboxylation is probably crucial for Mg(2+) binding and, consequently, for the gamma-phosphate positioning of ATP.

The protein resides in the cytoplasm. It carries out the reaction UDP-N-acetyl-alpha-D-muramoyl-L-alanyl-D-glutamate + meso-2,6-diaminopimelate + ATP = UDP-N-acetyl-alpha-D-muramoyl-L-alanyl-gamma-D-glutamyl-meso-2,6-diaminopimelate + ADP + phosphate + H(+). It participates in cell wall biogenesis; peptidoglycan biosynthesis. Catalyzes the addition of meso-diaminopimelic acid to the nucleotide precursor UDP-N-acetylmuramoyl-L-alanyl-D-glutamate (UMAG) in the biosynthesis of bacterial cell-wall peptidoglycan. This chain is UDP-N-acetylmuramoyl-L-alanyl-D-glutamate--2,6-diaminopimelate ligase, found in Alkaliphilus oremlandii (strain OhILAs) (Clostridium oremlandii (strain OhILAs)).